Here is a 476-residue protein sequence, read N- to C-terminus: Protein DETOXIFICATION 17 (476 aa).

12 helical membrane passes run 29–51, 70–90, 111–131, 140–160, 177–197, 205–225, 252–272, 286–306, 326–346, 363–383, 405–425, and 431–451; these read LWLSAPLIGVSLLQYSLQVISVM, FASVTGFTFLLGTASALETLC, FVLLILSVPLSIIWANTEQIL, IASVAGSYAKYMIPSLFAYGL, VFVCSGITTCLHLLLCWLFVL, GAALAISVSYWFNVILLSCYV, IAFPSAVMVCLELWSFELLVL, VLSICLNTSLTIWQISVGLGG, LAVYVIVGIAVAEGIVVVTVL, IIAYAASMIPIVACGNFLDGL, LGSYYLVGVPLGLLLGFHFHI, and WLGIVTALSVQVLCLSLVTIF.

The protein belongs to the multi antimicrobial extrusion (MATE) (TC 2.A.66.1) family.

It localises to the membrane. In Arabidopsis thaliana (Mouse-ear cress), this protein is Protein DETOXIFICATION 17.